The following is a 287-amino-acid chain: Thiazole synthase (287 aa).

The active-site Schiff-base intermediate with DXP is the lysine 111. 1-deoxy-D-xylulose 5-phosphate contacts are provided by residues glycine 172, 203 to 204 (AG), and 225 to 226 (NT). The segment at 268-287 (PQEGVISTRPYGSQADEIGS) is disordered.

This sequence belongs to the ThiG family. In terms of assembly, homotetramer. Forms heterodimers with either ThiH or ThiS.

It localises to the cytoplasm. The enzyme catalyses [ThiS sulfur-carrier protein]-C-terminal-Gly-aminoethanethioate + 2-iminoacetate + 1-deoxy-D-xylulose 5-phosphate = [ThiS sulfur-carrier protein]-C-terminal Gly-Gly + 2-[(2R,5Z)-2-carboxy-4-methylthiazol-5(2H)-ylidene]ethyl phosphate + 2 H2O + H(+). The protein operates within cofactor biosynthesis; thiamine diphosphate biosynthesis. Functionally, catalyzes the rearrangement of 1-deoxy-D-xylulose 5-phosphate (DXP) to produce the thiazole phosphate moiety of thiamine. Sulfur is provided by the thiocarboxylate moiety of the carrier protein ThiS. In vitro, sulfur can be provided by H(2)S. The protein is Thiazole synthase of Rhodopirellula baltica (strain DSM 10527 / NCIMB 13988 / SH1).